An 878-amino-acid polypeptide reads, in one-letter code: Lon protease 2 (878 aa).

The Lon N-terminal domain maps to Leu85–Ile281. Gly434–Thr441 contacts ATP. Positions Asn668–Ile850 constitute a Lon proteolytic domain. Catalysis depends on residues Ser756 and Lys799.

Belongs to the peptidase S16 family. Homohexamer. Organized in a ring with a central cavity.

The protein localises to the cytoplasm. The enzyme catalyses Hydrolysis of proteins in presence of ATP.. In terms of biological role, ATP-dependent serine protease that mediates the selective degradation of mutant and abnormal proteins as well as certain short-lived regulatory proteins. Required for cellular homeostasis and for survival from DNA damage and developmental changes induced by stress. Degrades polypeptides processively to yield small peptide fragments that are 5 to 10 amino acids long. Binds to DNA in a double-stranded, site-specific manner. The protein is Lon protease 2 of Hydrogenovibrio crunogenus (strain DSM 25203 / XCL-2) (Thiomicrospira crunogena).